Reading from the N-terminus, the 379-residue chain is RIB43A-like with coiled-coils protein 1 (379 aa).

Coiled-coil stretches lie at residues 43–111 (EALN…RCEL) and 285–337 (IRKV…EFRR).

The protein belongs to the RIB43A family. As to quaternary structure, microtubule inner protein component of sperm flagellar doublet microtubules.

Its subcellular location is the cytoplasm. The protein localises to the cytoskeleton. The protein resides in the flagellum axoneme. The polypeptide is RIB43A-like with coiled-coils protein 1 (RIBC1) (Bos taurus (Bovine)).